Reading from the N-terminus, the 330-residue chain is uncharacterized protein (330 aa).

A helical transmembrane segment spans residues 2–22 (IKPIYLIIIGTVICLVILYYF). N-linked (GlcNAc...) asparagine; by host glycosylation is found at N72, N94, N234, and N315.

Its subcellular location is the membrane. This is an uncharacterized protein from Acanthamoeba polyphaga mimivirus (APMV).